The primary structure comprises 119 residues: Phosphoribosyl-AMP cyclohydrolase (119 aa).

Asp-72 serves as a coordination point for Mg(2+). Cys-73 provides a ligand contact to Zn(2+). Mg(2+) is bound by residues Asp-74 and Asp-76. Positions 89 and 96 each coordinate Zn(2+).

Belongs to the PRA-CH family. As to quaternary structure, homodimer. Requires Mg(2+) as cofactor. Zn(2+) is required as a cofactor.

It localises to the cytoplasm. It carries out the reaction 1-(5-phospho-beta-D-ribosyl)-5'-AMP + H2O = 1-(5-phospho-beta-D-ribosyl)-5-[(5-phospho-beta-D-ribosylamino)methylideneamino]imidazole-4-carboxamide. It functions in the pathway amino-acid biosynthesis; L-histidine biosynthesis; L-histidine from 5-phospho-alpha-D-ribose 1-diphosphate: step 3/9. Catalyzes the hydrolysis of the adenine ring of phosphoribosyl-AMP. This chain is Phosphoribosyl-AMP cyclohydrolase, found in Methanocella arvoryzae (strain DSM 22066 / NBRC 105507 / MRE50).